Reading from the N-terminus, the 221-residue chain is Carbonic anhydrase (221 aa).

Residues cysteine 38, aspartate 40, histidine 99, and cysteine 102 each coordinate Zn(2+).

Belongs to the beta-class carbonic anhydrase family. Zn(2+) serves as cofactor.

It catalyses the reaction hydrogencarbonate + H(+) = CO2 + H2O. The polypeptide is Carbonic anhydrase (cynT) (Helicobacter pylori (strain ATCC 700392 / 26695) (Campylobacter pylori)).